The following is a 126-amino-acid chain: Large ribosomal subunit protein eL8 (126 aa).

The protein belongs to the eukaryotic ribosomal protein eL8 family. As to quaternary structure, part of the 50S ribosomal subunit. Probably part of the RNase P complex.

Its subcellular location is the cytoplasm. Functionally, multifunctional RNA-binding protein that recognizes the K-turn motif in ribosomal RNA, the RNA component of RNase P, box H/ACA, box C/D and box C'/D' sRNAs. The polypeptide is Large ribosomal subunit protein eL8 (Cenarchaeum symbiosum (strain A)).